A 516-amino-acid chain; its full sequence is Propionyl-CoA carboxylase, carboxyltransferase subunit (516 aa).

Positions 1–32 (MTMEDRIDELREKREEALKGGGEDRIASQHDK) are disordered. A CoA carboxyltransferase N-terminal domain is found at 3 to 259 (MEDRIDELRE…NNVEDPPRVE (257 aa)). Residues 263-509 (DPERVADELE…KSKRKSQPDK (247 aa)) form the CoA carboxyltransferase C-terminal domain.

Belongs to the AccD/PCCB family. The propionyl coenzyme A carboxylase (PCC) complex is composed of three subunits: PccA (biotin carboxylase and biotin-carboxyl carrier), PccB (carboxyltransferase) and PccX.

It carries out the reaction propanoyl-CoA + hydrogencarbonate + ATP = (S)-methylmalonyl-CoA + ADP + phosphate + H(+). It participates in metabolic intermediate metabolism; propanoyl-CoA degradation; succinyl-CoA from propanoyl-CoA: step 1/3. Functionally, part of the propionyl coenzyme A carboxylase (PCC) complex involved in propionate utilization and in the production of the poly(3-hydroxybutyrate-co-3-hydroxyvalerate)(PHBV), which is a water-insoluble biopolymer used as intracellular energy reserve material when cells grow under conditions of nutrient limitation. The complex catalyzes the carboxylation of propionyl-CoA to methylmalonyl-CoA. PCC is also able to catalyze the carboxylation of acetyl-CoA. This chain is Propionyl-CoA carboxylase, carboxyltransferase subunit, found in Haloferax mediterranei (strain ATCC 33500 / DSM 1411 / JCM 8866 / NBRC 14739 / NCIMB 2177 / R-4) (Halobacterium mediterranei).